The primary structure comprises 338 residues: Ketol-acid reductoisomerase (NADP(+)) (338 aa).

Residues 1–181 (MKVFYDKDAD…GGGRAGIIET (181 aa)) form the KARI N-terminal Rossmann domain. NADP(+) is bound by residues 24–27 (YGSQ), Arg-47, and Ser-52. His-107 is a catalytic residue. Gly-133 is a binding site for NADP(+). One can recognise a KARI C-terminal knotted domain in the interval 182 to 327 (NFREETETDL…SKLRAMMPWI (146 aa)). Asp-190, Glu-194, Glu-226, and Glu-230 together coordinate Mg(2+). A substrate-binding site is contributed by Ser-251.

The protein belongs to the ketol-acid reductoisomerase family. Requires Mg(2+) as cofactor.

The catalysed reaction is (2R)-2,3-dihydroxy-3-methylbutanoate + NADP(+) = (2S)-2-acetolactate + NADPH + H(+). It catalyses the reaction (2R,3R)-2,3-dihydroxy-3-methylpentanoate + NADP(+) = (S)-2-ethyl-2-hydroxy-3-oxobutanoate + NADPH + H(+). Its pathway is amino-acid biosynthesis; L-isoleucine biosynthesis; L-isoleucine from 2-oxobutanoate: step 2/4. The protein operates within amino-acid biosynthesis; L-valine biosynthesis; L-valine from pyruvate: step 2/4. In terms of biological role, involved in the biosynthesis of branched-chain amino acids (BCAA). Catalyzes an alkyl-migration followed by a ketol-acid reduction of (S)-2-acetolactate (S2AL) to yield (R)-2,3-dihydroxy-isovalerate. In the isomerase reaction, S2AL is rearranged via a Mg-dependent methyl migration to produce 3-hydroxy-3-methyl-2-ketobutyrate (HMKB). In the reductase reaction, this 2-ketoacid undergoes a metal-dependent reduction by NADPH to yield (R)-2,3-dihydroxy-isovalerate. In Burkholderia mallei (strain NCTC 10229), this protein is Ketol-acid reductoisomerase (NADP(+)).